A 187-amino-acid polypeptide reads, in one-letter code: Elongation factor P (187 aa).

It belongs to the elongation factor P family.

The protein resides in the cytoplasm. Its pathway is protein biosynthesis; polypeptide chain elongation. Its function is as follows. Involved in peptide bond synthesis. Stimulates efficient translation and peptide-bond synthesis on native or reconstituted 70S ribosomes in vitro. Probably functions indirectly by altering the affinity of the ribosome for aminoacyl-tRNA, thus increasing their reactivity as acceptors for peptidyl transferase. The polypeptide is Elongation factor P (Jannaschia sp. (strain CCS1)).